The primary structure comprises 448 residues: MTQYLPPNLLALFAAREPIPFMPPVDKLPHEKKSRGYLGVAKFMADFEDPKDTPLPKTVETRQERLERRRREKAEQVAYKLEREIALWDPTEIKNATEDPFRTLFIARINYDTSESKLRREFEFYGPIKKIVLIHDQESGKPKGYAFIEYEHERDMHAAYKHADGKKIDSKRVLVDVERARTVKGWLPRRLGGGLGGTRRGGNDVNIKHSGREDNERERERYRLEREREDREGPGRGGGSNGLDARPGRGFGAERRRSRSRERRDRERDRGRGAVASNGRSRSRSRERRKRRAGSRERYDEFDRRDRRDRERERDRDREREKKKKRSKSRERESSRERRERKRERRDRERGTGSGGDVKERKPDFRDMDVIKIKEEPVDDGYPTFDYQNATIKREIDDEDEEKYRPPPAHHNMFSVPPPPILGRGNASTNPNPDNGQQSSGDPSWWRQ.

A required for interaction with U1 RNA region spans residues Thr91 to Gly201. The 79-residue stretch at Arg102–Ala180 folds into the RRM domain. Residues Pro188–Gln448 form a disordered region. Positions Leu191–Arg200 are enriched in gly residues. Composition is skewed to basic and acidic residues over residues Asn206–Pro234 and Glu262–Arg272. The segment covering Ser281–Ala293 has biased composition (basic residues). Basic and acidic residues-rich tracts occupy residues Gly294–Arg320 and Arg346–Glu376. Positions Arg405–Gly425 are mediates binding to Psi. The span at Asn426–Gln448 shows a compositional bias: polar residues.

In terms of assembly, component of the U1 snRNP. Interacts with Psi; essential for alternative splicing of P-element transposase. Interacts with the SMN complex.

The protein localises to the nucleus speckle. It is found in the nucleus. It localises to the nucleoplasm. Its function is as follows. Mediates the splicing of pre-mRNA by binding to the stem loop I region of U1-snRNA. Required during oogenesis for nurse cell chromatin dispersal. The protein is U1 small nuclear ribonucleoprotein 70 kDa (snRNP-U1-70K) of Drosophila melanogaster (Fruit fly).